A 273-amino-acid chain; its full sequence is 2,3,4,5-tetrahydropyridine-2,6-dicarboxylate N-succinyltransferase (273 aa).

Residues Arg105 and Asp142 each coordinate substrate.

This sequence belongs to the transferase hexapeptide repeat family. Homotrimer.

The protein resides in the cytoplasm. It catalyses the reaction (S)-2,3,4,5-tetrahydrodipicolinate + succinyl-CoA + H2O = (S)-2-succinylamino-6-oxoheptanedioate + CoA. It functions in the pathway amino-acid biosynthesis; L-lysine biosynthesis via DAP pathway; LL-2,6-diaminopimelate from (S)-tetrahydrodipicolinate (succinylase route): step 1/3. The chain is 2,3,4,5-tetrahydropyridine-2,6-dicarboxylate N-succinyltransferase from Bordetella parapertussis (strain 12822 / ATCC BAA-587 / NCTC 13253).